The sequence spans 199 residues: Ribonuclease P protein component 3 (199 aa).

This sequence belongs to the eukaryotic/archaeal RNase P protein component 3 family. In terms of assembly, consists of a catalytic RNA component and at least 4-5 protein subunits.

The protein resides in the cytoplasm. The catalysed reaction is Endonucleolytic cleavage of RNA, removing 5'-extranucleotides from tRNA precursor.. Part of ribonuclease P, a protein complex that generates mature tRNA molecules by cleaving their 5'-ends. The protein is Ribonuclease P protein component 3 of Archaeoglobus fulgidus (strain ATCC 49558 / DSM 4304 / JCM 9628 / NBRC 100126 / VC-16).